Consider the following 192-residue polypeptide: PTS-dependent dihydroxyacetone kinase, ADP-binding subunit DhaL (192 aa).

The DhaL domain maps to 5-189 (DTTIEWLGKF…SAYLFETLLE (185 aa)). Positions 29, 34, and 36 each coordinate Mg(2+). Residues 37–40 (HGAN), 78–79 (AS), glycine 115, methionine 124, arginine 161, and 174–176 (DPG) each bind ADP.

As to quaternary structure, homodimer. The dihydroxyacetone kinase complex is composed of a homodimer of DhaM, a homodimer of DhaK and the subunit DhaL. It depends on Mg(2+) as a cofactor.

Its subcellular location is the cytoplasm. The enzyme catalyses dihydroxyacetone + phosphoenolpyruvate = dihydroxyacetone phosphate + pyruvate. The protein operates within polyol metabolism; glycerol degradation. Its function is as follows. ADP-binding subunit of the dihydroxyacetone kinase, which is responsible for the phosphoenolpyruvate (PEP)-dependent phosphorylation of dihydroxyacetone. DhaL-ADP is converted to DhaL-ATP via a phosphoryl group transfer from DhaM and transmits it to dihydroxyacetone binds to DhaK. This is PTS-dependent dihydroxyacetone kinase, ADP-binding subunit DhaL from Lactococcus lactis subsp. lactis (strain IL1403) (Streptococcus lactis).